The primary structure comprises 146 residues: U-scoloptoxin(16)-Er1a (146 aa).

Residues 1–26 (MNTVSVVQFLAVGCAVFVLYGRGVFA) form the signal peptide.

Belongs to the scoloptoxin-16 family. Post-translationally, contains 4 disulfide bonds. As to expression, expressed by the venom gland.

It is found in the secreted. The sequence is that of U-scoloptoxin(16)-Er1a from Ethmostigmus rubripes (Giant centipede).